A 1123-amino-acid chain; its full sequence is Phytochrome A (1123 aa).

Residues 1–14 (MSSSRPSQSSTTSS) are compositionally biased toward low complexity. A disordered region spans residues 1-20 (MSSSRPSQSSTTSSRSKHSA). One can recognise a GAF domain in the interval 218-401 (SMERLCDTMV…VFAILVNKEL (184 aa)). Cys-323 is a binding site for phytochromobilin. The region spanning 617–687 (VTAEMVRLIE…KMLELALQGQ (71 aa)) is the PAS 1 domain. Positions 690 to 746 (RNVEFEIKTHGPSRDSSPISLIVNACASKDVRDSVVGVCFIAQDITGQKSIMDKFTR) constitute a PAC domain. The PAS 2 domain maps to 747–821 (IEGDYRAIIQ…KNQEAFVNFG (75 aa)). A Histidine kinase domain is found at 901–1118 (YIRRQIRNPL…TFIISVELAV (218 aa)).

The protein belongs to the phytochrome family. Homodimer. Contains one covalently linked phytochromobilin chromophore.

In terms of biological role, regulatory photoreceptor which exists in two forms that are reversibly interconvertible by light: the Pr form that absorbs maximally in the red region of the spectrum and the Pfr form that absorbs maximally in the far-red region. Photoconversion of Pr to Pfr induces an array of morphogenic responses, whereas reconversion of Pfr to Pr cancels the induction of those responses. Pfr controls the expression of a number of nuclear genes including those encoding the small subunit of ribulose-bisphosphate carboxylase, chlorophyll A/B binding protein, protochlorophyllide reductase, rRNA, etc. It also controls the expression of its own gene(s) in a negative feedback fashion. The polypeptide is Phytochrome A (PHYA) (Solanum tuberosum (Potato)).